The following is a 558-amino-acid chain: Atlastin-1 (558 aa).

The segment at 1 to 28 is disordered; sequence MAKSRRDRNSWGGFSEKSSDWSSEEEEP. An N-terminal hypervariable region (HVR) region spans residues 1-34; the sequence is MAKSRRDRNSWGGFSEKSSDWSSEEEEPVRKAGP. The Cytoplasmic segment spans residues 1-449; sequence MAKSRRDRNS…NIFHAARTPA (449 aa). 3 positions are modified to phosphoserine: serine 10, serine 22, and serine 23. The region spanning 64 to 309 is the GB1/RHD3-type G domain; that stretch reads DKEVVAVSVA…LIPWLLSPER (246 aa). The GDP site is built by arginine 77, lysine 78, glycine 79, lysine 80, serine 81, phenylalanine 82, glutamine 148, arginine 217, aspartate 218, valine 276, and asparagine 279. GTP-binding residues include arginine 77, lysine 78, glycine 79, lysine 80, serine 81, and phenylalanine 82. Serine 81 is a binding site for Mg(2+). Residues arginine 217, aspartate 218, and valine 276 each coordinate GTP. The segment at 347–438 is 3HB (three-helix bundle) domain; that stretch reads MLQATAEANN…YIQYIKHNDS (92 aa). The residue at position 395 (lysine 395) is an N6-acetyllysine. A coiled-coil region spans residues 412–439; it reads EFSRRYLQQLESEIDELYIQYIKHNDSK. The segment at 439–447 is linker; that stretch reads KNIFHAART. A helical membrane pass occupies residues 450-470; the sequence is TLFVVIFITYVIAGVTGFIGL. Residue aspartate 471 is a topological domain, lumenal. The helical transmembrane segment at 472 to 492 threads the bilayer; it reads IIASLCNMIMGLTLITLCTWA. Residues 493-558 lie on the Cytoplasmic side of the membrane; sequence YIRYSGEYRE…PTQQPEKKKI (66 aa). Positions 521-558 are autoinhibitory domain; sequence NEALYKLYSAAATHRHLCHQAFPAPKSEPTQQPEKKKI.

The protein belongs to the TRAFAC class dynamin-like GTPase superfamily. GB1/RHD3 GTPase family. GB1 subfamily. As to quaternary structure, monomeric and homodimeric. The homodimer, transiently formed by two molecules on opposing membranes, is the active form mediating ER membrane fusion. Interacts with REEP1, REEP5, RTN3 and RTN4 (via the transmembrane region); these proteins are involved in endoplasmic reticulum tubular network organization. Interacts with ZFYVE27; both proteins are involved in endoplasmic reticulum tubular network organization. Interacts with ARL6IP1; both proteins are involved in endoplasmic reticulum tubular network organization. Interacts with SPAST; the interaction is direct, could recruit SPAST to Golgi membranes. Interacts (via N-terminal region) with MAP4K4 (via CNH regulatory domain). May interact with TMED2. Interacts with CPT1C. In terms of processing, phosphorylated. Phosphorylation, by different kinases, of the N-terminal hypervariable region (HVR) regulates the ATL1-mediated membrane tethering step.

The protein resides in the endoplasmic reticulum membrane. It is found in the golgi apparatus membrane. It localises to the cell projection. Its subcellular location is the axon. The enzyme catalyses GTP + H2O = GDP + phosphate + H(+). Atlastin-1 (ATL1) is a membrane-anchored GTPase that mediates the GTP-dependent fusion of endoplasmic reticulum (ER) membranes, maintaining the continuous ER network. It facilitates the formation of three-way junctions where ER tubules intersect. Two atlastin-1 on neighboring ER tubules bind GTP and form loose homodimers through the GB1/RHD3-type G domains and 3HB regions. Upon GTP hydrolysis, the 3HB regions tighten, pulling the membranes together to drive their fusion. After fusion, the homodimer disassembles upon release of inorganic phosphate (Pi). Subsequently, GDP dissociates, resetting the monomers to a conformation ready for a new fusion cycle. May also regulate more or less directly Golgi biogenesis. Indirectly regulates axonal development. This chain is Atlastin-1, found in Mus musculus (Mouse).